A 298-amino-acid chain; its full sequence is Nucleotide-binding protein Dred_3054 (298 aa).

An ATP-binding site is contributed by 20–27 (GMSGAGKT). 71 to 74 (DIRG) is a GTP binding site.

Belongs to the RapZ-like family.

Displays ATPase and GTPase activities. This Desulforamulus reducens (strain ATCC BAA-1160 / DSM 100696 / MI-1) (Desulfotomaculum reducens) protein is Nucleotide-binding protein Dred_3054.